Consider the following 931-residue polypeptide: Transportin (931 aa).

HEAT repeat units lie at residues 10–37 (GLKQLVYVLNLSNSTSREVHDQIREELD), 42–79 (VPDYNNYLTLIFKSNELQPHIRSVAGLVLKTNIKQYFE), 88–121 (YIKREILPVLSDPDASVRHTVGNIITNLIKKSCF), 127–164 (LLPALNLALDSNSQDLIEGSLYTLSLLCEDSTKKLDSD), 171–201 (NQLIPKLIMFFKCNNADFRKKALVSISYFII), 214–241 (FLKGIFSMSEDPSEAVRTNVCKTLVTLV), 253–280 (KDVIQYMLHATKDKSEEVALEACEFWTA), 296–421 (PVLV…LSGI), 430–459 (VTLPLIEQRMNEQNPWPVRESAILALGAIA), 471–498 (SKVIPYLINTLNDPKPLVRSITCWTLSR), 512–545 (LHPLVVNLLNRIVDNNKKVQEAACSAFATLEEEA), 553–586 (LQMILVTFVNAFGKYQAKNLLILYDAISTLAKVV), 594–632 (ELINILVPPLLQKFNALDDSNKNLLPLLGCLNQVCSSIG), 640–693 (SLFF…GIGT), 704–735 (LPHLLLQCMNLRGSDVLQSSFALLGDMSKFCL), 743–776 (PDYLNILTNNLYPEYLSVCNNASWAIGEIAIRMP), 784–819 (VAIRDRLISNINKVNLNRGVLENTAVTIGRLGIVSP), 827–860 (DKFIQCWCMAIRRKTDDIEKDSAFRGMWLIINNN), and 869–900 (VYICDAVASWDKMQPDLYEAYFKLLHMYKTSM). The region spanning 32–99 (IREELDKFHS…KREILPVLSD (68 aa)) is the Importin N-terminal domain. Residues 317 to 401 (DQGDDSMTPD…DDDDDDDGFE (85 aa)) form a disordered region. Positions 358-381 (DNNNNSNNNNSSNNNSSNNNNNNN) are enriched in low complexity. Residues 382-401 (NEDDEEYNDDDDDDDDDGFE) show a composition bias toward acidic residues.

Belongs to the importin beta family. Importin beta-2 subfamily. As to quaternary structure, forms a complex with an importin alpha subunit.

It localises to the cytoplasm. Its subcellular location is the nucleus envelope. Its function is as follows. Functions in nuclear protein import via a substrate-importin alpha-beta transport complex that passes though the nuclear pore complexes (NPC). Mediates docking of the substrate-importin complex to distinct nucleoporins. The polypeptide is Transportin (tnpo) (Dictyostelium discoideum (Social amoeba)).